The sequence spans 401 residues: Probable tRNA sulfurtransferase (401 aa).

In terms of domain architecture, THUMP spans 60-165 (EEICSLLKNI…EEATFLTIRN (106 aa)). Residues 183 to 184 (ML), 208 to 209 (HF), Arg265, Gly287, and Gln296 each bind ATP.

The protein belongs to the ThiI family.

It is found in the cytoplasm. It catalyses the reaction [ThiI sulfur-carrier protein]-S-sulfanyl-L-cysteine + a uridine in tRNA + 2 reduced [2Fe-2S]-[ferredoxin] + ATP + H(+) = [ThiI sulfur-carrier protein]-L-cysteine + a 4-thiouridine in tRNA + 2 oxidized [2Fe-2S]-[ferredoxin] + AMP + diphosphate. The enzyme catalyses [ThiS sulfur-carrier protein]-C-terminal Gly-Gly-AMP + S-sulfanyl-L-cysteinyl-[cysteine desulfurase] + AH2 = [ThiS sulfur-carrier protein]-C-terminal-Gly-aminoethanethioate + L-cysteinyl-[cysteine desulfurase] + A + AMP + 2 H(+). It participates in cofactor biosynthesis; thiamine diphosphate biosynthesis. Its function is as follows. Catalyzes the ATP-dependent transfer of a sulfur to tRNA to produce 4-thiouridine in position 8 of tRNAs, which functions as a near-UV photosensor. Also catalyzes the transfer of sulfur to the sulfur carrier protein ThiS, forming ThiS-thiocarboxylate. This is a step in the synthesis of thiazole, in the thiamine biosynthesis pathway. The sulfur is donated as persulfide by IscS. This chain is Probable tRNA sulfurtransferase, found in Bacillus velezensis (strain DSM 23117 / BGSC 10A6 / LMG 26770 / FZB42) (Bacillus amyloliquefaciens subsp. plantarum).